The sequence spans 335 residues: MDVVLDVLDTFVFDKLYALLLPAKSFDLLDQDSVVDYNSHINRYVTLTPSQYAVESSLARDNILRQFLSLFITIWAFGLLLYLTTASLSFALVFDKRAMQHPKFLRHQIRLEIGQALRAMPVMAALTAPLFLAEVRGYSKLYDFPTGSPFPLYTYLQYPLFIAFTDFAIYWIHRGLHHPAIYKRLHKPHHRWIISTPYASYAFHPVDGWCQSLPYHVYPFLFPLQKAAYLGLFVFVTIWTVMIHDGEYALDSPVINGSACHTIHHYYFNYNYGQFITFWDRIGGSYRRPNRELFDKQQRLQQTEIQRQVEEMERLVKEVEGSDDRCYEQDTKKTS.

The next 3 helical transmembrane spans lie at 74–94 (IWAF…ALVF), 113–133 (IGQA…LFLA), and 152–172 (LYTY…IYWI). The Fatty acid hydroxylase domain maps to 160–284 (LFIAFTDFAI…FITFWDRIGG (125 aa)). Positions 173–177 (HRGLH) match the Histidine box-1 motif. Residues 186 to 190 (HKPHH) carry the Histidine box-2 motif. The helical transmembrane segment at 219 to 239 (PFLFPLQKAAYLGLFVFVTIW) threads the bilayer. N-linked (GlcNAc...) asparagine glycosylation occurs at Asn-256. The Histidine box-3 motif lies at 261 to 265 (HTIHH).

This sequence belongs to the sterol desaturase family. The cofactor is Fe cation.

Its subcellular location is the endoplasmic reticulum membrane. Its pathway is steroid metabolism; ergosterol biosynthesis. Its function is as follows. Delta(7)-sterol 5(6)-desaturase; part of the third module of ergosterol biosynthesis pathway that includes the late steps of the pathway. Erg3B catalyzes the introduction of a C-5 double bond in the B ring to produce 5-dehydroepisterol. The third module or late pathway involves the ergosterol synthesis itself through consecutive reactions that mainly occur in the endoplasmic reticulum (ER) membrane. Firstly, the squalene synthase erg9 catalyzes the condensation of 2 farnesyl pyrophosphate moieties to form squalene, which is the precursor of all steroids. Squalene synthase is crucial for balancing the incorporation of farnesyl diphosphate (FPP) into sterol and nonsterol isoprene synthesis. Secondly, squalene is converted into lanosterol by the consecutive action of the squalene epoxidase erg1 and the lanosterol synthase erg7. Then, the delta(24)-sterol C-methyltransferase erg6 methylates lanosterol at C-24 to produce eburicol. Eburicol is the substrate of the sterol 14-alpha demethylase encoded by cyp51A and cyp51B, to yield 4,4,24-trimethyl ergosta-8,14,24(28)-trienol. The C-14 reductase erg24 then reduces the C14=C15 double bond which leads to 4,4-dimethylfecosterol. A sequence of further demethylations at C-4, involving the C-4 demethylation complex containing the C-4 methylsterol oxidases erg25A or erg25B, the sterol-4-alpha-carboxylate 3-dehydrogenase erg26 and the 3-keto-steroid reductase erg27, leads to the production of fecosterol via 4-methylfecosterol. The C-8 sterol isomerase erg2 then catalyzes the reaction which results in unsaturation at C-7 in the B ring of sterols and thus converts fecosterol to episterol. The sterol-C5-desaturase erg3B then catalyzes the introduction of a C-5 double bond in the B ring to produce 5-dehydroepisterol. The 2 other sterol-C5-desaturases, erg3A and erg3C, seem to be less important in ergosterol biosynthesis. The C-22 sterol desaturase erg5 further converts 5-dehydroepisterol into ergosta-5,7,22,24(28)-tetraen-3beta-ol by forming the C-22(23) double bond in the sterol side chain. Finally, ergosta-5,7,22,24(28)-tetraen-3beta-ol is substrate of the C-24(28) sterol reductases erg4A and erg4B to produce ergosterol. Possible alternative sterol biosynthetic pathways might exist from fecosterol to ergosterol, depending on the activities of the erg3 isoforms. This Aspergillus fumigatus (strain ATCC MYA-4609 / CBS 101355 / FGSC A1100 / Af293) (Neosartorya fumigata) protein is Delta(7)-sterol 5(6)-desaturase erg3B.